The sequence spans 553 residues: Hydroxylamine reductase (553 aa).

Cys-3, Cys-6, Cys-18, and Cys-25 together coordinate [2Fe-2S] cluster. Residues His-249, Glu-273, Cys-317, Cys-405, Cys-433, Cys-459, Glu-493, and Lys-495 each contribute to the hybrid [4Fe-2O-2S] cluster site. Cysteine persulfide is present on Cys-405.

This sequence belongs to the HCP family. It depends on [2Fe-2S] cluster as a cofactor. Hybrid [4Fe-2O-2S] cluster serves as cofactor.

It localises to the cytoplasm. The enzyme catalyses A + NH4(+) + H2O = hydroxylamine + AH2 + H(+). In terms of biological role, catalyzes the reduction of hydroxylamine to form NH(3) and H(2)O. This is Hydroxylamine reductase from Mannheimia succiniciproducens (strain KCTC 0769BP / MBEL55E).